Reading from the N-terminus, the 499-residue chain is Phenylalanine--tRNA ligase alpha subunit B (499 aa).

L-phenylalanine is bound by residues Thr-330, 373–375 (QIE), and Tyr-413. Glu-415 contacts Mg(2+). Phe-439 is an L-phenylalanine binding site.

Belongs to the class-II aminoacyl-tRNA synthetase family. Phe-tRNA synthetase alpha subunit type 2 subfamily. As to quaternary structure, heterotetramer; dimer of two heterodimers formed by alpha and beta subunits. The cofactor is Mg(2+).

It is found in the cytoplasm. It catalyses the reaction tRNA(Phe) + L-phenylalanine + ATP = L-phenylalanyl-tRNA(Phe) + AMP + diphosphate + H(+). This Xenopus laevis (African clawed frog) protein is Phenylalanine--tRNA ligase alpha subunit B (farsa-b).